The following is a 297-amino-acid chain: HTH-type transcriptional regulator IlvY (297 aa).

Residues 1–58 (MDLRDLKTFLHLAESRHFGRSARAMHVSPSTLSRQIQRLEEDLGQPLFVRDNRTVTLT) enclose the HTH lysR-type domain. The segment at residues 18–37 (FGRSARAMHVSPSTLSRQIQ) is a DNA-binding region (H-T-H motif).

The protein belongs to the LysR transcriptional regulatory family.

The protein localises to the cytoplasm. Functionally, this protein activates the transcription of the ilvC gene in the presence of acetolactate or acetohydroxybutyrate. IlvY is also a negative regulator of its own expression. This Escherichia coli (strain K12) protein is HTH-type transcriptional regulator IlvY (ilvY).